The chain runs to 294 residues: Mitochondrial substrate carrier family protein ucpB (294 aa).

Over 1-10 (MTSQESIGIK) the chain is Mitochondrial intermembrane. 3 Solcar repeats span residues 9 to 93 (IKFL…IKNY), 101 to 187 (TNLL…IKHM), and 197 to 288 (DGLQ…LRKV). A helical transmembrane segment spans residues 11-31 (FLFGGLSCMGAAVVSNPVDVL). Over 32–67 (KTRFQIHGEGIDSKSLGLVNGTIKIIKNEGISAMYK) the chain is Mitochondrial matrix. The helical transmembrane segment at 68 to 88 (GLTPSLLREATYSTLRMGGYD) threads the bilayer. Residues 89–106 (VIKNYFIDSNGKTNLLSK) lie on the Mitochondrial intermembrane side of the membrane. The chain crosses the membrane as a helical span at residues 107–127 (VTSGALSGALGACITSPTDLI). Over 128-161 (KVRMQASSKGVKYDSISSAFKEIIAKEGIKGLWK) the chain is Mitochondrial matrix. A helical membrane pass occupies residues 162-182 (GVGPTTQRAALLTASQIPSYD). Over 183-192 (HIKHMILDHG) the chain is Mitochondrial intermembrane. The chain crosses the membrane as a helical span at residues 193–213 (IIQVDGLQVHIVSSIFAGLIA). Residues 214–267 (SITTSPVDLVKTRIMNQPFDSNGVGLIYKSSYDCFKKTFQSEGISGLYKGFLPN) lie on the Mitochondrial matrix side of the membrane. A helical transmembrane segment spans residues 268-285 (WFRIGPHTIVTFILYEYL). The Mitochondrial intermembrane portion of the chain corresponds to 286–294 (RKVSGIKPI).

The protein belongs to the mitochondrial carrier (TC 2.A.29) family.

It localises to the mitochondrion inner membrane. Mitochondrial solute carriers shuttle metabolites, nucleotides, and cofactors through the mitochondrial inner membrane. This is Mitochondrial substrate carrier family protein ucpB (ucpB) from Dictyostelium discoideum (Social amoeba).